A 184-amino-acid polypeptide reads, in one-letter code: ATP synthase subunit b, chloroplastic (184 aa).

Residues 27-49 (LATNPINLSVVFGVLIFFGKGVL) traverse the membrane as a helical segment.

The protein belongs to the ATPase B chain family. F-type ATPases have 2 components, F(1) - the catalytic core - and F(0) - the membrane proton channel. F(1) has five subunits: alpha(3), beta(3), gamma(1), delta(1), epsilon(1). F(0) has four main subunits: a(1), b(1), b'(1) and c(10-14). The alpha and beta chains form an alternating ring which encloses part of the gamma chain. F(1) is attached to F(0) by a central stalk formed by the gamma and epsilon chains, while a peripheral stalk is formed by the delta, b and b' chains.

The protein localises to the plastid. Its subcellular location is the chloroplast thylakoid membrane. Its function is as follows. F(1)F(0) ATP synthase produces ATP from ADP in the presence of a proton or sodium gradient. F-type ATPases consist of two structural domains, F(1) containing the extramembraneous catalytic core and F(0) containing the membrane proton channel, linked together by a central stalk and a peripheral stalk. During catalysis, ATP synthesis in the catalytic domain of F(1) is coupled via a rotary mechanism of the central stalk subunits to proton translocation. Component of the F(0) channel, it forms part of the peripheral stalk, linking F(1) to F(0). The protein is ATP synthase subunit b, chloroplastic of Draba nemorosa (Woodland whitlowgrass).